We begin with the raw amino-acid sequence, 260 residues long: Troponin I 3 (260 aa).

Residues 192 to 219 (DLDEIMAKKKGTADGKPEWSKKEKKEEE) are compositionally biased toward basic and acidic residues. The segment at 192-260 (DLDEIMAKKK…EEEEEEEEEE (69 aa)) is disordered. The span at 231-260 (PEAEPEPEAAEPAAEEPEAEEEEEEEEEEE) shows a compositional bias: acidic residues.

It belongs to the troponin I family. Expressed in body wall muscle from first larval stage to adult. In adults expression is predominantly in vulval and anal muscles, body wall muscle expression is weaker. Also expressed in vulval muscles of hermaphrodites and the sex muscles of males.

Functionally, troponin I is the inhibitory subunit of troponin, the thin filament regulatory complex which confers calcium-sensitivity to muscle actomyosin ATPase activity. The protein is Troponin I 3 (tni-3) of Caenorhabditis elegans.